A 759-amino-acid chain; its full sequence is Inhibitor of nuclear factor kappa-B kinase subunit alpha (759 aa).

The interval 1–20 (MERGAERGPPPAPGGVALRG) is disordered. The Protein kinase domain maps to 29 to 316 (WEMRDRLGTG…PETNSPKCFL (288 aa)). ATP-binding positions include 35–43 (LGTGGFGNV) and lysine 58. The active-site Proton acceptor is aspartate 158. Residues 469-490 (LLRYNANLIKMKNNMVSASQQL) are leucine-zipper. Over residues 691–703 (TPAATWVPQSSSE) the composition is skewed to polar residues. The disordered stretch occupies residues 691–715 (TPAATWVPQSSSEYAPHPLSSMATP). Residues 753 to 758 (FDWSWL) are NEMO-binding.

It belongs to the protein kinase superfamily. Ser/Thr protein kinase family. I-kappa-B kinase subfamily.

It is found in the cytoplasm. It localises to the nucleus. It catalyses the reaction L-seryl-[I-kappa-B protein] + ATP = O-phospho-L-seryl-[I-kappa-B protein] + ADP + H(+). With respect to regulation, activated when phosphorylated and inactivated when dephosphorylated. Functionally, phosphorylates inhibitors of NF-kappa-B thus leading to the dissociation of the inhibitor/NF-kappa-B complex and ultimately the degradation of the inhibitor. Phosphorylates 'Ser-10' of histone H3 at NF-kappa-B-regulated promoters during inflammatory responses triggered by cytokines. The protein is Inhibitor of nuclear factor kappa-B kinase subunit alpha (CHUK) of Gallus gallus (Chicken).